Here is a 414-residue protein sequence, read N- to C-terminus: Serine hydroxymethyltransferase (414 aa).

(6S)-5,6,7,8-tetrahydrofolate is bound by residues Leu117 and Gly121–Leu123. Lys226 carries the post-translational modification N6-(pyridoxal phosphate)lysine. (6S)-5,6,7,8-tetrahydrofolate-binding positions include Glu241 and Thr349–Phe351.

Belongs to the SHMT family. Homodimer. It depends on pyridoxal 5'-phosphate as a cofactor.

It is found in the cytoplasm. The catalysed reaction is (6R)-5,10-methylene-5,6,7,8-tetrahydrofolate + glycine + H2O = (6S)-5,6,7,8-tetrahydrofolate + L-serine. It participates in one-carbon metabolism; tetrahydrofolate interconversion. The protein operates within amino-acid biosynthesis; glycine biosynthesis; glycine from L-serine: step 1/1. Functionally, catalyzes the reversible interconversion of serine and glycine with tetrahydrofolate (THF) serving as the one-carbon carrier. Also exhibits THF-independent aldolase activity toward beta-hydroxyamino acids, producing glycine and aldehydes, via a retro-aldol mechanism. The protein is Serine hydroxymethyltransferase of Methanothrix thermoacetophila (strain DSM 6194 / JCM 14653 / NBRC 101360 / PT) (Methanosaeta thermophila).